The sequence spans 248 residues: Tabserin (248 aa).

The N-terminal stretch at 1 to 19 is a signal peptide; that stretch reads MLKYSALFLYLIYVGGSES. The Peptidase S1 domain maps to 24 to 248; the sequence is IVGGVPVAEE…PYFENGLRKR (225 aa). Cysteines 49 and 65 form a disulfide. Catalysis depends on charge relay system residues H64 and D111. 2 disulfide bridges follow: C175–C189 and C201–C226. Residue S205 is the Charge relay system of the active site.

It belongs to the peptidase S1 family. In terms of tissue distribution, expressed in salivary glands.

Its subcellular location is the secreted. Its function is as follows. Serine protease that inhibits blood coagulation in a dose-dependent manner. May act by destroying coagulant factors to inhibit blood coagulation. In Tabanus yao (Horsefly), this protein is Tabserin.